Consider the following 104-residue polypeptide: uncharacterized protein (104 aa).

The next 2 helical transmembrane spans lie at 26-46 (IGTG…FTFF) and 70-90 (GLLG…IIAI).

The protein localises to the membrane. This is an uncharacterized protein from Acanthamoeba polyphaga mimivirus (APMV).